Here is a 367-residue protein sequence, read N- to C-terminus: Uroporphyrinogen decarboxylase (367 aa).

M1 bears the N-acetylmethionine mark. Coproporphyrinogen I-binding residues include R37, A39, R41, R50, D86, Y164, S219, and H339. Coproporphyrinogen III-binding residues include R37, A39, and R41. 4 residues coordinate coproporphyrinogen III: D86, Y164, S219, and H339.

This sequence belongs to the uroporphyrinogen decarboxylase family. As to quaternary structure, homodimer.

The protein localises to the cytoplasm. The protein resides in the cytosol. It carries out the reaction uroporphyrinogen III + 4 H(+) = coproporphyrinogen III + 4 CO2. The enzyme catalyses uroporphyrinogen I + 4 H(+) = coproporphyrinogen I + 4 CO2. It functions in the pathway porphyrin-containing compound metabolism; protoporphyrin-IX biosynthesis; coproporphyrinogen-III from 5-aminolevulinate: step 4/4. Its function is as follows. Catalyzes the sequential decarboxylation of the four acetate side chains of uroporphyrinogen to form coproporphyrinogen and participates in the fifth step in the heme biosynthetic pathway. Isomer I or isomer III of uroporphyrinogen may serve as substrate, but only coproporphyrinogen III can ultimately be converted to heme. In vitro also decarboxylates pentacarboxylate porphyrinogen I. The protein is Uroporphyrinogen decarboxylase of Mus musculus (Mouse).